The chain runs to 112 residues: uncharacterized protein (112 aa).

A disordered region spans residues 91 to 112 (ENQRKKGTRKRRSSEVDSKEKS). Residues 103–112 (SSEVDSKEKS) show a composition bias toward basic and acidic residues.

This is an uncharacterized protein from Caenorhabditis elegans.